The primary structure comprises 80 residues: Waprin-Phi3 (80 aa).

Residues 1 to 22 (MKPWILLLLAGLLILSTQLTTA) form the signal peptide. In terms of domain architecture, WAP spans 31 to 78 (PKVKPGECPKVKIPPDYPCNQYCVWDFDCEGNKKCCPVGCAKECFPPG). 4 disulfide bridges follow: cysteine 38–cysteine 66, cysteine 49–cysteine 70, cysteine 53–cysteine 65, and cysteine 59–cysteine 74.

Belongs to the venom waprin family. Expressed by the venom gland.

The protein resides in the secreted. Damages membranes of susceptible bacteria. Has no hemolytic activity. Not toxic to mice. Does not inhibit the proteinases elastase and cathepsin G. This is Waprin-Phi3 from Philodryas olfersii (Green snake).